The chain runs to 375 residues: DNA replication and repair protein RecF (375 aa).

30-37 (GNNGSGKS) is a binding site for ATP.

The protein belongs to the RecF family.

The protein resides in the cytoplasm. The RecF protein is involved in DNA metabolism; it is required for DNA replication and normal SOS inducibility. RecF binds preferentially to single-stranded, linear DNA. It also seems to bind ATP. The polypeptide is DNA replication and repair protein RecF (Hahella chejuensis (strain KCTC 2396)).